A 150-amino-acid polypeptide reads, in one-letter code: Guanine nucleotide-binding protein subunit gamma 2 (150 aa).

Acidic residues predominate over residues 1–11 (MRGEANGEEEQ). A disordered region spans residues 1–59 (MRGEANGEEEQQPPRRNHLRDDAEEEEEVERRAARPVSGQQQQQQRRRPTDVGGGAAMR). The stretch at 65–97 (GKHRLSAAIARLDQELQSLQDELNELETMEPAS) forms a coiled coil. In terms of domain architecture, G protein gamma spans 71-137 (AAIARLDQEL…RWFQRVRSSR (67 aa)).

As to quaternary structure, g proteins are composed of 3 units, alpha, beta and gamma. Interacts with the beta subunit RGB1.

The protein resides in the cell membrane. Its function is as follows. Guanine nucleotide-binding proteins (G proteins) are involved as modulators or transducers in various transmembrane signaling systems. The chain is Guanine nucleotide-binding protein subunit gamma 2 from Oryza sativa subsp. indica (Rice).